We begin with the raw amino-acid sequence, 215 residues long: 3-demethoxyubiquinol 3-hydroxylase (215 aa).

The Fe cation site is built by E64, E94, H97, E146, E178, and H181.

This sequence belongs to the COQ7 family. The cofactor is Fe cation.

It is found in the cell membrane. The enzyme catalyses a 5-methoxy-2-methyl-3-(all-trans-polyprenyl)benzene-1,4-diol + AH2 + O2 = a 3-demethylubiquinol + A + H2O. Its pathway is cofactor biosynthesis; ubiquinone biosynthesis. Catalyzes the hydroxylation of 2-nonaprenyl-3-methyl-6-methoxy-1,4-benzoquinol during ubiquinone biosynthesis. The chain is 3-demethoxyubiquinol 3-hydroxylase from Pseudomonas fluorescens (strain Pf0-1).